A 383-amino-acid chain; its full sequence is Probable endoplasmic reticulum-Golgi intermediate compartment protein 3 (383 aa).

The Cytoplasmic segment spans residues 1–26 (MLISQLKKFDAYPKTVDDFRVKTYTG). A helical membrane pass occupies residues 27–47 (AIVSIIGGVFILWLFFSQVTL). The Lumenal portion of the chain corresponds to 48–347 (YFSTDIHHEL…GKSFASFLTN (300 aa)). The helical transmembrane segment at 348-368 (VCAIIGGVFTVFGIFDSFIYY) threads the bilayer. Topologically, residues 369–383 (STKNLQKKIDLGKTF) are cytoplasmic.

This sequence belongs to the ERGIC family.

It is found in the endoplasmic reticulum-Golgi intermediate compartment membrane. The protein resides in the golgi apparatus. It localises to the cis-Golgi network membrane. The protein localises to the endoplasmic reticulum membrane. Possible role in transport between endoplasmic reticulum and Golgi. This Dictyostelium discoideum (Social amoeba) protein is Probable endoplasmic reticulum-Golgi intermediate compartment protein 3 (ergic3).